A 316-amino-acid chain; its full sequence is Acetyl-coenzyme A carboxylase carboxyl transferase subunit alpha (316 aa).

The CoA carboxyltransferase C-terminal domain occupies 40–293 (LERRSKDALR…GETIENGFRE (254 aa)).

It belongs to the AccA family. In terms of assembly, acetyl-CoA carboxylase is a heterohexamer composed of biotin carboxyl carrier protein (AccB), biotin carboxylase (AccC) and two subunits each of ACCase subunit alpha (AccA) and ACCase subunit beta (AccD).

The protein localises to the cytoplasm. It carries out the reaction N(6)-carboxybiotinyl-L-lysyl-[protein] + acetyl-CoA = N(6)-biotinyl-L-lysyl-[protein] + malonyl-CoA. It functions in the pathway lipid metabolism; malonyl-CoA biosynthesis; malonyl-CoA from acetyl-CoA: step 1/1. Its function is as follows. Component of the acetyl coenzyme A carboxylase (ACC) complex. First, biotin carboxylase catalyzes the carboxylation of biotin on its carrier protein (BCCP) and then the CO(2) group is transferred by the carboxyltransferase to acetyl-CoA to form malonyl-CoA. This is Acetyl-coenzyme A carboxylase carboxyl transferase subunit alpha from Chelativorans sp. (strain BNC1).